Reading from the N-terminus, the 227-residue chain is Transcriptional regulatory protein CusR (227 aa).

The Response regulatory domain occupies 2–116 (KLLIVEDEKK…ELLARVRTLL (115 aa)). At aspartate 51 the chain carries 4-aspartylphosphate. The segment at residues 125-223 (ESQFQVADLM…VRGVGYMLEV (99 aa)) is a DNA-binding region (ompR/PhoB-type).

Post-translationally, phosphorylated by CusS.

It localises to the cytoplasm. In terms of biological role, member of the two-component regulatory system CusS/CusR involved in response to copper and silver. This is Transcriptional regulatory protein CusR (cusR) from Escherichia coli O6:H1 (strain CFT073 / ATCC 700928 / UPEC).